Reading from the N-terminus, the 157-residue chain is SsrA-binding protein (157 aa).

Over residues 136–151 the composition is skewed to basic and acidic residues; sequence KRETSAKRDWSREKQR. A disordered region spans residues 136-157; sequence KRETSAKRDWSREKQRLLKQNS.

This sequence belongs to the SmpB family.

It is found in the cytoplasm. Required for rescue of stalled ribosomes mediated by trans-translation. Binds to transfer-messenger RNA (tmRNA), required for stable association of tmRNA with ribosomes. tmRNA and SmpB together mimic tRNA shape, replacing the anticodon stem-loop with SmpB. tmRNA is encoded by the ssrA gene; the 2 termini fold to resemble tRNA(Ala) and it encodes a 'tag peptide', a short internal open reading frame. During trans-translation Ala-aminoacylated tmRNA acts like a tRNA, entering the A-site of stalled ribosomes, displacing the stalled mRNA. The ribosome then switches to translate the ORF on the tmRNA; the nascent peptide is terminated with the 'tag peptide' encoded by the tmRNA and targeted for degradation. The ribosome is freed to recommence translation, which seems to be the essential function of trans-translation. The chain is SsrA-binding protein from Cereibacter sphaeroides (strain ATCC 17029 / ATH 2.4.9) (Rhodobacter sphaeroides).